The chain runs to 81 residues: Photosystem I iron-sulfur center (81 aa).

2 consecutive 4Fe-4S ferredoxin-type domains span residues 2–31 (SHAV…MVPW) and 39–68 (IASS…IRVY). [4Fe-4S] cluster contacts are provided by Cys-11, Cys-14, Cys-17, Cys-21, Cys-48, Cys-51, Cys-54, and Cys-58.

In terms of assembly, the cyanobacterial PSI reaction center is composed of one copy each of PsaA,B,C,D,E,F,I,J,K,L,M and X, and forms trimeric complexes. The cofactor is [4Fe-4S] cluster.

It localises to the cellular thylakoid membrane. It carries out the reaction reduced [plastocyanin] + hnu + oxidized [2Fe-2S]-[ferredoxin] = oxidized [plastocyanin] + reduced [2Fe-2S]-[ferredoxin]. Apoprotein for the two 4Fe-4S centers FA and FB of photosystem I (PSI); essential for photochemical activity. FB is the terminal electron acceptor of PSI, donating electrons to ferredoxin. The C-terminus interacts with PsaA/B/D and helps assemble the protein into the PSI complex. Required for binding of PsaD and PsaE to PSI. PSI is a plastocyanin/cytochrome c6-ferredoxin oxidoreductase, converting photonic excitation into a charge separation, which transfers an electron from the donor P700 chlorophyll pair to the spectroscopically characterized acceptors A0, A1, FX, FA and FB in turn. The protein is Photosystem I iron-sulfur center of Prochlorococcus marinus (strain MIT 9312).